Reading from the N-terminus, the 940-residue chain is Chordin (940 aa).

The signal sequence occupies residues 1–19 (MMEGLLWILLSVIIASVHG). In terms of domain architecture, VWFC 1 spans 42 to 118 (SGCSFGGRFY…LPGHCCKTCP (77 aa)). CHRD domains are found at residues 162–277 (TTTD…KHRA), 279–398 (FAET…GRRS), 404–519 (SVLS…LLPY), and 525–652 (RRNE…VPNH). N-linked (GlcNAc...) asparagine glycosylation is found at N347 and N430. 3 VWFC domains span residues 689 to 748 (HSCF…PICE), 767 to 836 (EGCY…KECP), and 855 to 919 (RLCK…PECI).

Belongs to the chordin family. As to quaternary structure, interacts with twsg1 and/or bmp4. Post-translationally, cleaved by tolloid proteases; cleavage participates in dorsoventral patterning during early development.

The protein resides in the secreted. Its function is as follows. Dorsalizing factor. Key developmental protein that dorsalizes early vertebrate embryonic tissues by binding to ventralizing TGF-beta family bone morphogenetic proteins (BMPs) and sequestering them in latent complexes. This chain is Chordin (chd), found in Danio rerio (Zebrafish).